Here is a 193-residue protein sequence, read N- to C-terminus: Potassium-transporting ATPase KdpC subunit (193 aa).

The chain crosses the membrane as a helical span at residues 7 to 27 (PLVVLFVVLNAVTGLAYPAVM).

This sequence belongs to the KdpC family. The system is composed of three essential subunits: KdpA, KdpB and KdpC.

The protein localises to the cell inner membrane. Part of the high-affinity ATP-driven potassium transport (or Kdp) system, which catalyzes the hydrolysis of ATP coupled with the electrogenic transport of potassium into the cytoplasm. This subunit acts as a catalytic chaperone that increases the ATP-binding affinity of the ATP-hydrolyzing subunit KdpB by the formation of a transient KdpB/KdpC/ATP ternary complex. This is Potassium-transporting ATPase KdpC subunit from Burkholderia cenocepacia (strain HI2424).